A 37-amino-acid chain; its full sequence is U1-theraphotoxin-Hs1b (37 aa).

Intrachain disulfides connect cysteine 4/cysteine 18, cysteine 8/cysteine 29, and cysteine 23/cysteine 34.

In terms of assembly, form 1 and form 2 may dimerize. As to expression, expressed by the venom gland.

It localises to the secreted. Its function is as follows. Lethal neurotoxin that blocks neuromuscular transmission. Acts cooperatively to potentiate the activity of huwentoxin-I. The sequence is that of U1-theraphotoxin-Hs1b from Cyriopagopus schmidti (Chinese bird spider).